A 260-amino-acid chain; its full sequence is Transmembrane protein 106C (260 aa).

Gly2 is lipidated: N-myristoyl glycine. Residues 85 to 105 form a helical membrane-spanning segment; sequence YVLLSVLLCLLASGLVFFFLF. Residue Asn171 is glycosylated (N-linked (GlcNAc...) asparagine). A helical transmembrane segment spans residues 196 to 216; the sequence is SYVYFYCTLPAILVHNIVIFM.

It belongs to the TMEM106 family. Interacts with TMEM106B.

The protein localises to the endoplasmic reticulum membrane. Its subcellular location is the membrane. This chain is Transmembrane protein 106C (Tmem106c), found in Rattus norvegicus (Rat).